We begin with the raw amino-acid sequence, 1105 residues long: Probable diguanylate cyclase DgcE (1105 aa).

A run of 10 helical transmembrane segments spans residues 9–29 (LIAL…SFIF), 38–58 (QFGT…VAFY), 64–84 (MWPG…ILLF), 88–108 (SLNM…AVLL), 127–147 (LALG…VLLT), 156–176 (FLIW…LGLL), 190–207 (LLFE…LSWL), 211–228 (YLPW…WSAV), 236–256 (FLIF…DPSL), and 270–290 (WLPF…MYAF). The region spanning 300–370 (SETHFRNAME…QQVEKLISGE (71 aa)) is the PAS 1 domain. PAC domains follow at residues 374-426 (YSME…VNQQ) and 501-552 (FKLE…ALFQ). One can recognise a PAS 2 domain in the interval 553–623 (EKERLHITLD…LMENIYSADT (71 aa)). The 55-residue stretch at 626 to 680 (SAIEQDVVLHCRSGGSYDVHYSITPLSTLDGSNIGSVLVIQDVTESRKMLRQLSY) folds into the PAC 3 domain. Residues 712–845 (QRHALVFIDL…GRGRVTVYEP (134 aa)) form the GGDEF domain. Residue Asp720 participates in Mg(2+) binding. Substrate contacts are provided by Asn728, His733, and Asp737. Asp763 provides a ligand contact to Mg(2+). The active-site Proton acceptor is the Asp763. Arg783 serves as a coordination point for substrate. The 250-residue stretch at 855–1104 (AAMSLDEQWR…LLVNSSYFAI (250 aa)) folds into the EAL domain.

Homodimer. Mg(2+) is required as a cofactor.

It is found in the cell inner membrane. The enzyme catalyses 2 GTP = 3',3'-c-di-GMP + 2 diphosphate. It functions in the pathway purine metabolism; 3',5'-cyclic di-GMP biosynthesis. Catalyzes the synthesis of cyclic-di-GMP (c-di-GMP) via the condensation of 2 GTP molecules. Involved in the control of the switch from cell motility to adhesion via regulation of cellular levels of c-di-GMP. Part of a signaling cascade that regulates curli biosynthesis. The cascade is composed of two c-di-GMP control modules, in which c-di-GMP controlled by the DgcE/PdeH pair (module I) regulates the activity of the DgcM/PdeR pair (module II), which in turn regulates activity of the transcription factor MlrA and expression of the master biofilm regulator csgD. The protein is Probable diguanylate cyclase DgcE of Escherichia coli (strain K12).